The sequence spans 1403 residues: DNA-directed RNA polymerase subunit beta' (1403 aa).

The Zn(2+) site is built by Cys70, Cys72, Cys85, and Cys88. 3 residues coordinate Mg(2+): Asp460, Asp462, and Asp464. Zn(2+)-binding residues include Cys814, Cys888, Cys895, and Cys898. Residues 1369-1403 are disordered; that stretch reads RRKRRMLEQPESLTADTGTSHYGEDEISESGAATA. The segment covering 1379-1388 has biased composition (polar residues); it reads ESLTADTGTS.

It belongs to the RNA polymerase beta' chain family. In terms of assembly, the RNAP catalytic core consists of 2 alpha, 1 beta, 1 beta' and 1 omega subunit. When a sigma factor is associated with the core the holoenzyme is formed, which can initiate transcription. The cofactor is Mg(2+). It depends on Zn(2+) as a cofactor.

The catalysed reaction is RNA(n) + a ribonucleoside 5'-triphosphate = RNA(n+1) + diphosphate. In terms of biological role, DNA-dependent RNA polymerase catalyzes the transcription of DNA into RNA using the four ribonucleoside triphosphates as substrates. The sequence is that of DNA-directed RNA polymerase subunit beta' from Nitrosococcus oceani (strain ATCC 19707 / BCRC 17464 / JCM 30415 / NCIMB 11848 / C-107).